The following is a 218-amino-acid chain: Copper acquisition factor BIM1 (218 aa).

Positions 1 to 19 (MFALKFILITSFIASTALA) are cleaved as a signal peptide. Residues H20 and H65 each contribute to the Cu(2+) site. 2 cysteine pairs are disulfide-bonded: C40–C144 and C110–C161. N-linked (GlcNAc...) asparagine glycosylation is found at N87, N91, and N124. D138 lines the Cu(2+) pocket. N-linked (GlcNAc...) asparagine glycosylation is found at N158 and N170. Residues 160-194 (TCTDDASRTSNASSTSSGSATATSAAATSSSSGTS) form a disordered region. The segment covering 167–194 (RTSNASSTSSGSATATSAAATSSSSGTS) has biased composition (low complexity). A lipid anchor (GPI-anchor amidated serine) is attached at S190. The propeptide at 191-218 (SGTSGAIKEVVGLGALSLALGIAGLIIL) is removed in mature form.

Belongs to the X325 family. Requires Cu(2+) as cofactor.

The protein resides in the cell membrane. Lytic polysaccharide monooxygenase-like protein that has diverged to biological functions other than polysaccharide degradation since it does not perform oxidative cleavage of polysaccharides. Cell surface-bound protein that functions in the copper-accumulation pathway shared by the CUF1-dependent copper transporter CTR1. Involved in maintaining cell wall integrity during copper deficiency. Binds Cu(2+) with an estimated 1:1 stoichiometry and might serve as an extracellular copper ligand. FRE4 and FRE7 metalloreductases probably function together with CTR1 and BIM1 to liberate the Cu(2+) bound to the BIM1 copper-binding site for subsequent import of Cu(+) into the cell by CTR1, via the reduction of BIM1-bound Cu(2+) to Cu(+) to reduce binding affinity for BIM1 but increase affinity for CTR1. Facilitates copper acquisition in the brain of mammalian hosts and acts as a copper-dependent virulence trait in fungal meningitis. While BIM1 plays a critical role in cryptococcal meningitis, at least in part through its role in copper acquisition, it could play additional roles during copper limitation or as a means to invade and colonize host tissues in the brain, by compromising host carbohydrate integrity via its lytic polysaccharide monooxygenase (LPMO) activity, which has still to be determined. In Cryptococcus neoformans var. neoformans serotype D (strain JEC21 / ATCC MYA-565) (Filobasidiella neoformans), this protein is Copper acquisition factor BIM1.